The primary structure comprises 263 residues: L-histidine 2-aminobutanoyltransferase (263 aa).

This sequence belongs to the methyltransferase superfamily. CntL family.

The enzyme catalyses L-histidine + S-adenosyl-L-methionine = (2S)-2-amino-4-{[(1S)-1-carboxy-2-(1H-imidazol-4-yl)ethyl]amino}butanoate + S-methyl-5'-thioadenosine + H(+). Its function is as follows. Catalyzes the nucleophilic attack of one alpha-aminobutanoate moiety from SAM onto L-histidine to produce the intermediate (2S)-2-amino-4-{[(1S)-1-carboxy-2-(1H-imidazol-4-yl)ethyl]amino}butanoate. Functions in the biosynthesis of the metallophore pseudopaline, which is involved in the acquisition of nickel and zinc, and thus enables bacterial growth inside the host, where metal access is limited. Therefore, this enzyme probably contributes to Pseudomonas virulence. Appears to be specific for L-histidine as substrate. In Pseudomonas aeruginosa (strain ATCC 15692 / DSM 22644 / CIP 104116 / JCM 14847 / LMG 12228 / 1C / PRS 101 / PAO1), this protein is L-histidine 2-aminobutanoyltransferase.